The chain runs to 136 residues: Large ribosomal subunit protein uL16 (136 aa).

Belongs to the universal ribosomal protein uL16 family. In terms of assembly, part of the 50S ribosomal subunit.

Its function is as follows. Binds 23S rRNA and is also seen to make contacts with the A and possibly P site tRNAs. The protein is Large ribosomal subunit protein uL16 of Rickettsia rickettsii (strain Iowa).